Reading from the N-terminus, the 470-residue chain is Glutamate--tRNA ligase 1 (470 aa).

The 'HIGH' region motif lies at 8–18 (PSPTGYLHVGG). A 'KMSKS' region motif is present at residues 250–254 (KLSKR). K253 provides a ligand contact to ATP.

This sequence belongs to the class-I aminoacyl-tRNA synthetase family. Glutamate--tRNA ligase type 1 subfamily. In terms of assembly, monomer.

The protein resides in the cytoplasm. It catalyses the reaction tRNA(Glu) + L-glutamate + ATP = L-glutamyl-tRNA(Glu) + AMP + diphosphate. Its function is as follows. Catalyzes the attachment of glutamate to tRNA(Glu) in a two-step reaction: glutamate is first activated by ATP to form Glu-AMP and then transferred to the acceptor end of tRNA(Glu). In Pseudothermotoga lettingae (strain ATCC BAA-301 / DSM 14385 / NBRC 107922 / TMO) (Thermotoga lettingae), this protein is Glutamate--tRNA ligase 1.